The chain runs to 119 residues: DNA-directed RNA polymerase subunit omega (119 aa).

This sequence belongs to the RNA polymerase subunit omega family. The RNAP catalytic core consists of 2 alpha, 1 beta, 1 beta' and 1 omega subunit. When a sigma factor is associated with the core the holoenzyme is formed, which can initiate transcription.

It carries out the reaction RNA(n) + a ribonucleoside 5'-triphosphate = RNA(n+1) + diphosphate. In terms of biological role, promotes RNA polymerase assembly. Latches the N- and C-terminal regions of the beta' subunit thereby facilitating its interaction with the beta and alpha subunits. In Caulobacter sp. (strain K31), this protein is DNA-directed RNA polymerase subunit omega.